The sequence spans 332 residues: UDP-N-acetylenolpyruvoylglucosamine reductase (332 aa).

In terms of domain architecture, FAD-binding PCMH-type spans 15-184 (IDVSAACFLE…TYVSFRLSKR (170 aa)). R160 is a catalytic residue. The Proton donor role is filled by S232. The active site involves E328.

Belongs to the MurB family. The cofactor is FAD.

It localises to the cytoplasm. The enzyme catalyses UDP-N-acetyl-alpha-D-muramate + NADP(+) = UDP-N-acetyl-3-O-(1-carboxyvinyl)-alpha-D-glucosamine + NADPH + H(+). The protein operates within cell wall biogenesis; peptidoglycan biosynthesis. Cell wall formation. The polypeptide is UDP-N-acetylenolpyruvoylglucosamine reductase (Bacteroides fragilis (strain YCH46)).